The primary structure comprises 713 residues: Glutamine--fructose-6-phosphate aminotransferase [isomerizing] (713 aa).

The active-site For GATase activity is the C2. The Glutamine amidotransferase type-2 domain occupies 2–316; sequence CGIFGYVNFL…DDDIAHIYDG (315 aa). 2 SIS domains span residues 389-528 and 561-703; these read WLST…DSIS and CNSS…VDFP.

Homotetramer.

The catalysed reaction is D-fructose 6-phosphate + L-glutamine = D-glucosamine 6-phosphate + L-glutamate. It functions in the pathway nucleotide-sugar biosynthesis; UDP-N-acetyl-alpha-D-glucosamine biosynthesis; alpha-D-glucosamine 6-phosphate from D-fructose 6-phosphate: step 1/1. Functionally, involved in amino sugar synthesis (formation of chitin, supplies the amino sugars of asparagine-linked oligosaccharides of glycoproteins). This chain is Glutamine--fructose-6-phosphate aminotransferase [isomerizing] (GFA1), found in Candida albicans (strain SC5314 / ATCC MYA-2876) (Yeast).